Consider the following 276-residue polypeptide: MHPAAEHSPLGKSSEYIATYTPSLLFPIPRLAKWAELGVSGDALPWQGVDYWNCFELSWLLPSGKPVVAIGEFAIPCDSPNIIESKSFKLYLNSLNQTKFESVAQLQACLAKDLSAAAGKVVAVKVSTLADVEAQGVTTLPGQCIDALDVTIDNYEQPQPELLRCSTERVVEETVHSHLLKSNCPVTGQPDWGSVVVEYKGRALDHASLLTYLISFRQHADFHEQCVERIYLDLKKLLQPEYLTVYARYVRRGGLDINPYRSTRAISPENLRLVRQ.

Substrate is bound at residue 83–85 (IES). NADPH is bound at residue 85-86 (SK). Catalysis depends on Cys184, which acts as the Thioimide intermediate. The active-site Proton donor is Asp191. Substrate is bound at residue 223-224 (HE). 252-253 (RG) contacts NADPH.

This sequence belongs to the GTP cyclohydrolase I family. QueF type 2 subfamily. In terms of assembly, homodimer.

The protein localises to the cytoplasm. The enzyme catalyses 7-aminomethyl-7-carbaguanine + 2 NADP(+) = 7-cyano-7-deazaguanine + 2 NADPH + 3 H(+). It functions in the pathway tRNA modification; tRNA-queuosine biosynthesis. Catalyzes the NADPH-dependent reduction of 7-cyano-7-deazaguanine (preQ0) to 7-aminomethyl-7-deazaguanine (preQ1). The protein is NADPH-dependent 7-cyano-7-deazaguanine reductase of Pseudomonas entomophila (strain L48).